Here is a 227-residue protein sequence, read N- to C-terminus: Response regulator protein TodT (227 aa).

The Response regulatory domain maps to 28-142 (VIYILDDDNA…ELLGAIRAAL (115 aa)). A 4-aspartylphosphate modification is found at Asp-77. One can recognise an HTH luxR-type domain in the interval 158–223 (LKENYESLSK…DLVRVTERLK (66 aa)). A DNA-binding region (H-T-H motif) is located at residues 182–201 (NKQTALELDISEATVKVHRH).

In terms of processing, phosphorylated by TodS.

The protein localises to the cytoplasm. Its function is as follows. Member of the two-component regulatory system TodS/TodT involved in the regulation of toluene degradation. Phosphorylated TodT activates transcription of the tod operon (todXFC1C2BADEGIH). Binds specifically to a 6-bp palindromic DNA structure in the tod promoter region. The sequence is that of Response regulator protein TodT (todT) from Pseudomonas putida (strain ATCC 700007 / DSM 6899 / JCM 31910 / BCRC 17059 / LMG 24140 / F1).